The chain runs to 600 residues: FERM domain-containing protein 3 (600 aa).

Residues 31 to 311 enclose the FERM domain; the sequence is MRCTIRLLDD…ENQAFYKYAK (281 aa). The interval 413–440 is disordered; sequence SAPVLGNSPARGLETTADVTHDEEESIR. Residues 534–554 form a helical membrane-spanning segment; it reads LLLAAIGLLMVVLPLLLILLE.

The protein localises to the membrane. In Xenopus tropicalis (Western clawed frog), this protein is FERM domain-containing protein 3 (frmd3).